The following is a 152-amino-acid chain: Ribosome maturation factor RimP (152 aa).

The protein belongs to the RimP family.

The protein localises to the cytoplasm. In terms of biological role, required for maturation of 30S ribosomal subunits. The polypeptide is Ribosome maturation factor RimP (Pseudoalteromonas atlantica (strain T6c / ATCC BAA-1087)).